The primary structure comprises 339 residues: Dihydroorotate dehydrogenase (quinone) (339 aa).

FMN-binding positions include Ala-62–Lys-66 and Thr-86. Lys-66 is a substrate binding site. Asn-111 to Phe-115 is a binding site for substrate. FMN-binding residues include Asn-139 and Asn-172. Asn-172 provides a ligand contact to substrate. Ser-175 (nucleophile) is an active-site residue. Asn-177 lines the substrate pocket. Residues Lys-217 and Thr-245 each coordinate FMN. Position 246 to 247 (Asn-246 to Thr-247) interacts with substrate. FMN is bound by residues Gly-268, Gly-297, and Phe-318–Ser-319.

The protein belongs to the dihydroorotate dehydrogenase family. Type 2 subfamily. As to quaternary structure, monomer. FMN serves as cofactor.

The protein resides in the cell membrane. The enzyme catalyses (S)-dihydroorotate + a quinone = orotate + a quinol. Its pathway is pyrimidine metabolism; UMP biosynthesis via de novo pathway; orotate from (S)-dihydroorotate (quinone route): step 1/1. Catalyzes the conversion of dihydroorotate to orotate with quinone as electron acceptor. This is Dihydroorotate dehydrogenase (quinone) from Shewanella halifaxensis (strain HAW-EB4).